A 222-amino-acid chain; its full sequence is Germin-like protein subfamily 1 member 20 (222 aa).

The signal sequence occupies residues 1 to 22 (MRVSQSLVPFAIIALVLSFVNA). An intrachain disulfide couples cysteine 32 to cysteine 48. One can recognise a Cupin type-1 domain in the interval 62–213 (SGLNVPGNTN…AFQLDASVVK (152 aa)). Asparagine 77 is a glycosylation site (N-linked (GlcNAc...) asparagine). Mn(2+)-binding residues include histidine 110, histidine 112, glutamate 117, and histidine 159.

Belongs to the germin family. Oligomer (believed to be a pentamer but probably hexamer). Expressed in stems and developing embryos.

The protein localises to the secreted. It localises to the extracellular space. Its subcellular location is the apoplast. Its function is as follows. May play a role in plant defense. Probably has no oxalate oxidase activity even if the active site is conserved. This Arabidopsis thaliana (Mouse-ear cress) protein is Germin-like protein subfamily 1 member 20 (GLP5A).